The primary structure comprises 85 residues: Acyl carrier protein (85 aa).

The Carrier domain occupies 2-78; sequence SQISERVIDL…DAIAYIESHA (77 aa). Ser-37 carries the O-(pantetheine 4'-phosphoryl)serine modification.

This sequence belongs to the acyl carrier protein (ACP) family. Post-translationally, 4'-phosphopantetheine is transferred from CoA to a specific serine of apo-ACP by AcpS. This modification is essential for activity because fatty acids are bound in thioester linkage to the sulfhydryl of the prosthetic group.

Its subcellular location is the cytoplasm. It functions in the pathway lipid metabolism; fatty acid biosynthesis. Carrier of the growing fatty acid chain in fatty acid biosynthesis. The protein is Acyl carrier protein of Azobacteroides pseudotrichonymphae genomovar. CFP2.